A 325-amino-acid chain; its full sequence is NADH-quinone oxidoreductase subunit H (325 aa).

9 helical membrane-spanning segments follow: residues 11-31 (ILLS…CGAF), 50-69 (NRVG…KMFF), 81-101 (VIFT…FAIV), 114-134 (IGIL…LFAG), 154-174 (LSYE…AGSF), 186-206 (IWNV…GVAV), 237-257 (FFVG…TLFF), 265-285 (LPPF…FILI), and 304-324 (VCLP…LWQA).

It belongs to the complex I subunit 1 family. NDH-1 is composed of 13 different subunits. Subunits NuoA, H, J, K, L, M, N constitute the membrane sector of the complex.

The protein localises to the cell inner membrane. The enzyme catalyses a quinone + NADH + 5 H(+)(in) = a quinol + NAD(+) + 4 H(+)(out). Functionally, NDH-1 shuttles electrons from NADH, via FMN and iron-sulfur (Fe-S) centers, to quinones in the respiratory chain. The immediate electron acceptor for the enzyme in this species is believed to be ubiquinone. Couples the redox reaction to proton translocation (for every two electrons transferred, four hydrogen ions are translocated across the cytoplasmic membrane), and thus conserves the redox energy in a proton gradient. This subunit may bind ubiquinone. This is NADH-quinone oxidoreductase subunit H from Citrobacter koseri (strain ATCC BAA-895 / CDC 4225-83 / SGSC4696).